The sequence spans 221 residues: Ribosomal RNA small subunit methyltransferase Nep1 (221 aa).

S-adenosyl-L-methionine contacts are provided by residues G174, G179, and 196 to 201 (IGDETM).

It belongs to the class IV-like SAM-binding methyltransferase superfamily. RNA methyltransferase NEP1 family. Homodimer.

It carries out the reaction a pseudouridine in rRNA + S-adenosyl-L-methionine = an N(1)-methylpseudouridine in rRNA + S-adenosyl-L-homocysteine + H(+). Functionally, methyltransferase involved in ribosomal biogenesis. Specifically catalyzes the N1-methylation of the pseudouridine corresponding to position 914 in M.jannaschii 16S rRNA. The sequence is that of Ribosomal RNA small subunit methyltransferase Nep1 from Pyrobaculum islandicum (strain DSM 4184 / JCM 9189 / GEO3).